A 263-amino-acid polypeptide reads, in one-letter code: Ribonuclease HII (263 aa).

In terms of domain architecture, RNase H type-2 spans 71-262 (QAIAGIDEVG…VKSMCCDSTN (192 aa)). Residues aspartate 77, glutamate 78, and aspartate 172 each coordinate a divalent metal cation.

This sequence belongs to the RNase HII family. Requires Mn(2+) as cofactor. It depends on Mg(2+) as a cofactor.

The protein localises to the cytoplasm. The enzyme catalyses Endonucleolytic cleavage to 5'-phosphomonoester.. Functionally, endonuclease that specifically degrades the RNA of RNA-DNA hybrids. This chain is Ribonuclease HII, found in Streptococcus pyogenes serotype M12 (strain MGAS2096).